Here is a 549-residue protein sequence, read N- to C-terminus: MQADFVIIGSGSAGSAMASRLSEDGKHTVIVLEFGGSDVGPFIQMPAALAWPMSMDRYNWGYLSEPEPQLNNRRITAPRGKVIGGSSSINGMVYVRGHAEDFNRWEELGAQGWAYADVLPYFKRMEHSHGGEEGWRGTDGPLHVRRGDARNPLFHAFIEAGKQAGFEATEDYNGGKQEGFGLMEQTTWMGRRWSAATAYLKPALKRPNVELIRCFARKVVIENGRATGVEIERGGKIEIVKANSEVIVSASSFNSPKLLMLSGIGPGQHLQEMGIEVKIDRPGVGANLQDHMEFYFQQTSLKPVSLYSWLPWYMQGIVGAQWMFFKSGLGTSNQFEACAFLRSAPGVKQPDIQYHFLPVAISYDGKAAAKSHGFQAHVGYNLSKSRGAVTLRSSDPKADPVIRFNYMSHPEDWEKFRHCVRLTREIFGQKAFDDYRGPEIQPGPDVQTDDQIDAFLREHLESAYHPCGTCKMGSKDDPMAVVDPDTRVIGVEGLRVADSSIFPSLTYGNLNGPSIMTGEKAADHILGKPRLARSNQEPWINPRWEVSDR.

FAD is bound at residue aspartate 4–glutamate 33. The active-site Proton acceptor is the histidine 465.

This sequence belongs to the GMC oxidoreductase family. Requires FAD as cofactor.

The catalysed reaction is choline + A = betaine aldehyde + AH2. The enzyme catalyses betaine aldehyde + NAD(+) + H2O = glycine betaine + NADH + 2 H(+). It participates in amine and polyamine biosynthesis; betaine biosynthesis via choline pathway; betaine aldehyde from choline (cytochrome c reductase route): step 1/1. Its function is as follows. Involved in the biosynthesis of the osmoprotectant glycine betaine. Catalyzes the oxidation of choline to betaine aldehyde and betaine aldehyde to glycine betaine at the same rate. The sequence is that of Oxygen-dependent choline dehydrogenase from Rhizobium rhizogenes (strain K84 / ATCC BAA-868) (Agrobacterium radiobacter).